The chain runs to 366 residues: Transaldolase (366 aa).

The active-site Schiff-base intermediate with substrate is the lysine 140.

The protein belongs to the transaldolase family. Type 2 subfamily.

It localises to the cytoplasm. It catalyses the reaction D-sedoheptulose 7-phosphate + D-glyceraldehyde 3-phosphate = D-erythrose 4-phosphate + beta-D-fructose 6-phosphate. The protein operates within carbohydrate degradation; pentose phosphate pathway; D-glyceraldehyde 3-phosphate and beta-D-fructose 6-phosphate from D-ribose 5-phosphate and D-xylulose 5-phosphate (non-oxidative stage): step 2/3. Functionally, transaldolase is important for the balance of metabolites in the pentose-phosphate pathway. The polypeptide is Transaldolase (Saccharopolyspora erythraea (strain ATCC 11635 / DSM 40517 / JCM 4748 / NBRC 13426 / NCIMB 8594 / NRRL 2338)).